The primary structure comprises 352 residues: S-adenosylmethionine:tRNA ribosyltransferase-isomerase (352 aa).

Belongs to the QueA family. Monomer.

The protein localises to the cytoplasm. The catalysed reaction is 7-aminomethyl-7-carbaguanosine(34) in tRNA + S-adenosyl-L-methionine = epoxyqueuosine(34) in tRNA + adenine + L-methionine + 2 H(+). It functions in the pathway tRNA modification; tRNA-queuosine biosynthesis. Transfers and isomerizes the ribose moiety from AdoMet to the 7-aminomethyl group of 7-deazaguanine (preQ1-tRNA) to give epoxyqueuosine (oQ-tRNA). This is S-adenosylmethionine:tRNA ribosyltransferase-isomerase from Bacteroides fragilis (strain ATCC 25285 / DSM 2151 / CCUG 4856 / JCM 11019 / LMG 10263 / NCTC 9343 / Onslow / VPI 2553 / EN-2).